The primary structure comprises 541 residues: Putative ammonium transporter sll0537 (541 aa).

A run of 11 helical transmembrane segments spans residues 6 to 26 (TLWLLLCAGLVFFMQAGFMCL), 44 to 64 (FADFGISVALFWSFGFSIMFG), 86 to 106 (LAVFFLFQAMFCGTATTIISG), 117 to 137 (YLLVAGLASGLIYPLFGDWAW), 161 to 181 (FAGSTVVHSVGAWIGLATILV), 203 to 223 (MPFSVLGTLILWFGWLGFNGG), 235 to 255 (IMVNTVLAGVGGMLMAGLISL), 260 to 280 (MIQVEPLMNGSLAGLVAITAS), 283 to 303 (VVMTPIAMVIGATGSAIAYLV), 316 to 336 (VDAVAVHGGAGVWGTLCVGLF), and 356 to 376 (LLGIGVCTLWAFGLAWVFLTL).

This sequence belongs to the ammonia transporter channel (TC 1.A.11.2) family.

It localises to the cell membrane. This is Putative ammonium transporter sll0537 from Synechocystis sp. (strain ATCC 27184 / PCC 6803 / Kazusa).